The primary structure comprises 454 residues: Type II methyltransferase M.MvaI (454 aa).

This sequence belongs to the N(4)/N(6)-methyltransferase family. N(4) subfamily.

The catalysed reaction is a 2'-deoxycytidine in DNA + S-adenosyl-L-methionine = an N(4)-methyl-2'-deoxycytidine in DNA + S-adenosyl-L-homocysteine + H(+). Its function is as follows. An alpha subtype methylase, recognizes the double-stranded sequence 5'-CCWGG-3', methylatES C-2 on both strands, and protects the DNA from cleavage by the MvaI endonuclease. The sequence is that of Type II methyltransferase M.MvaI from Kocuria varians (Micrococcus varians).